The following is a 138-amino-acid chain: Large ribosomal subunit protein uL16 (138 aa).

A compositionally biased stretch (basic residues) spans 1–17 (MLIPRKVKHRKQHHPRQ). A disordered region spans residues 1-24 (MLIPRKVKHRKQHHPRQRGIASGG).

This sequence belongs to the universal ribosomal protein uL16 family. Part of the 50S ribosomal subunit.

Binds 23S rRNA and is also seen to make contacts with the A and possibly P site tRNAs. This Mycobacterium ulcerans (strain Agy99) protein is Large ribosomal subunit protein uL16.